The sequence spans 556 residues: Polyphenol oxidase 2 (556 aa).

Cu cation contacts are provided by histidine 57, histidine 81, histidine 90, histidine 250, histidine 254, and histidine 282. The segment at residues 79–81 (CTH) is a cross-link (2'-(S-cysteinyl)-histidine (Cys-His)). Histidine 254 contacts substrate. A propeptide spans 379–556 (SKPSSGARNT…FDDVAVHVIN (178 aa)) (removed in mature form).

This sequence belongs to the tyrosinase family. Heterotetramer. It depends on Cu(2+) as a cofactor. In terms of processing, the C-ter is probably cleaved after Gly-378 since the mature active protein is smaller than the protein encoded by the gene.

It catalyses the reaction 2 L-dopa + O2 = 2 L-dopaquinone + 2 H2O. It carries out the reaction L-tyrosine + O2 = L-dopaquinone + H2O. Its function is as follows. Copper-containing oxidase that catalyzes both the o-hydroxylation of monophenols and the subsequent oxidation of the resulting o-diphenols into reactive o-quinones, which evolve spontaneously to produce intermediates, which associate in dark brown pigments. Involved in the initial step of melanin synthesis. Melanins constitute a mechanism of defense and resistance to stress such as UV radiations, free radicals, gamma rays, dehydratation and extreme temperatures, and contribute to the fungal cell-wall resistance against hydrolytic enzymes in avoiding cellular lysis. Fungal pigments are also involved in the formation and stability of spores. The sequence is that of Polyphenol oxidase 2 (PPO2) from Agaricus bisporus (White button mushroom).